The sequence spans 333 residues: Holliday junction branch migration complex subunit RuvB (333 aa).

The tract at residues 1-182 (MDERLLSGES…FGVLSRLEYY (182 aa)) is large ATPase domain (RuvB-L). Residues leucine 21, arginine 22, glycine 63, lysine 66, threonine 67, threonine 68, 129-131 (EDF), arginine 172, tyrosine 182, and arginine 219 each bind ATP. Position 67 (threonine 67) interacts with Mg(2+). Positions 183 to 253 (TVDQLSEIVE…ITQMALELLQ (71 aa)) are small ATPAse domain (RuvB-S). The head domain (RuvB-H) stretch occupies residues 256 to 333 (KLGLDHIDHK…EHFGMEMPKV (78 aa)). Arginine 311 and arginine 316 together coordinate DNA.

This sequence belongs to the RuvB family. As to quaternary structure, homohexamer. Forms an RuvA(8)-RuvB(12)-Holliday junction (HJ) complex. HJ DNA is sandwiched between 2 RuvA tetramers; dsDNA enters through RuvA and exits via RuvB. An RuvB hexamer assembles on each DNA strand where it exits the tetramer. Each RuvB hexamer is contacted by two RuvA subunits (via domain III) on 2 adjacent RuvB subunits; this complex drives branch migration. In the full resolvosome a probable DNA-RuvA(4)-RuvB(12)-RuvC(2) complex forms which resolves the HJ.

It is found in the cytoplasm. The enzyme catalyses ATP + H2O = ADP + phosphate + H(+). Its function is as follows. The RuvA-RuvB-RuvC complex processes Holliday junction (HJ) DNA during genetic recombination and DNA repair, while the RuvA-RuvB complex plays an important role in the rescue of blocked DNA replication forks via replication fork reversal (RFR). RuvA specifically binds to HJ cruciform DNA, conferring on it an open structure. The RuvB hexamer acts as an ATP-dependent pump, pulling dsDNA into and through the RuvAB complex. RuvB forms 2 homohexamers on either side of HJ DNA bound by 1 or 2 RuvA tetramers; 4 subunits per hexamer contact DNA at a time. Coordinated motions by a converter formed by DNA-disengaged RuvB subunits stimulates ATP hydrolysis and nucleotide exchange. Immobilization of the converter enables RuvB to convert the ATP-contained energy into a lever motion, pulling 2 nucleotides of DNA out of the RuvA tetramer per ATP hydrolyzed, thus driving DNA branch migration. The RuvB motors rotate together with the DNA substrate, which together with the progressing nucleotide cycle form the mechanistic basis for DNA recombination by continuous HJ branch migration. Branch migration allows RuvC to scan DNA until it finds its consensus sequence, where it cleaves and resolves cruciform DNA. In Bacillus cereus (strain ATCC 10987 / NRS 248), this protein is Holliday junction branch migration complex subunit RuvB.